The chain runs to 536 residues: CTP synthase (536 aa).

The interval methionine 1–leucine 267 is amidoligase domain. Serine 13 contributes to the CTP binding site. A UTP-binding site is contributed by serine 13. Serine 14–isoleucine 19 lines the ATP pocket. L-glutamine is bound at residue tyrosine 54. Aspartate 71 lines the ATP pocket. Positions 71 and 141 each coordinate Mg(2+). CTP-binding positions include aspartate 148–glutamate 150, lysine 188–glutamine 193, and lysine 224. UTP contacts are provided by residues lysine 188–glutamine 193 and lysine 224. Arginine 240–alanine 242 lines the ATP pocket. Residues threonine 293 to serine 535 form the Glutamine amidotransferase type-1 domain. Residue glycine 355 participates in L-glutamine binding. The active-site Nucleophile; for glutamine hydrolysis is cysteine 382. L-glutamine-binding positions include leucine 383–glutamine 386, glutamate 406, and arginine 463. Active-site residues include histidine 508 and glutamate 510.

Belongs to the CTP synthase family. Homotetramer.

The enzyme catalyses UTP + L-glutamine + ATP + H2O = CTP + L-glutamate + ADP + phosphate + 2 H(+). The catalysed reaction is L-glutamine + H2O = L-glutamate + NH4(+). It catalyses the reaction UTP + NH4(+) + ATP = CTP + ADP + phosphate + 2 H(+). Its pathway is pyrimidine metabolism; CTP biosynthesis via de novo pathway; CTP from UDP: step 2/2. With respect to regulation, allosterically activated by GTP, when glutamine is the substrate; GTP has no effect on the reaction when ammonia is the substrate. The allosteric effector GTP functions by stabilizing the protein conformation that binds the tetrahedral intermediate(s) formed during glutamine hydrolysis. Inhibited by the product CTP, via allosteric rather than competitive inhibition. In terms of biological role, catalyzes the ATP-dependent amination of UTP to CTP with either L-glutamine or ammonia as the source of nitrogen. Regulates intracellular CTP levels through interactions with the four ribonucleotide triphosphates. This Staphylococcus saprophyticus subsp. saprophyticus (strain ATCC 15305 / DSM 20229 / NCIMB 8711 / NCTC 7292 / S-41) protein is CTP synthase.